We begin with the raw amino-acid sequence, 868 residues long: Probable mixed-linked glucan synthase 3 (868 aa).

A disordered region spans residues 36 to 68 (ERKAAGGGGGGAKGKHWAAADKGERRAAKECGG). The segment covering 53 to 68 (AAADKGERRAAKECGG) has biased composition (basic and acidic residues). 2 helical membrane-spanning segments follow: residues 86–106 (LLHP…LFFG) and 116–136 (IMWF…SWLL). Residue aspartate 211 is part of the active site. Substrate is bound by residues aspartate 412 and aspartate 414. Aspartate 573 is an active-site residue. 6 helical membrane passes run 649 to 669 (IYPV…MWLI), 686 to 706 (LLMI…WAGI), 717 to 737 (FFMI…VVNL), 771 to 791 (MLIP…VAIG), 809 to 829 (IMGL…ALAI), and 837 to 857 (PIIL…VYVA).

It belongs to the glycosyltransferase 2 family. Plant cellulose synthase-like F subfamily.

The protein resides in the golgi apparatus membrane. Functionally, may catalyze both beta-1,3 and beta-1,4 glycosidic linkage on beta-D-glucan. Essential for (1,3;1,4)-beta-D-glucans synthesis in grasses and cereals (Poaceae). The mixed-linked glucans (which are not present in walls of dicotyledons or most other monocotyledonous plants) are particularly important constituents of the walls of the starchy endosperm and aleurone cells of cereal grains such as oats, wheat, rice and barley. They can account for up to 70% by weight of the wall. The protein is Probable mixed-linked glucan synthase 3 (CSLF3) of Oryza sativa subsp. indica (Rice).